The primary structure comprises 601 residues: DNA ligase (601 aa).

ATP is bound at residue aspartate 258. The active-site N6-AMP-lysine intermediate is lysine 260. Arginine 265, arginine 280, glutamate 310, phenylalanine 350, arginine 427, and lysine 433 together coordinate ATP. The disordered stretch occupies residues 568 to 601 (DKSPEDATTTDEILEMYNKQPKKKIESPPIDESV).

This sequence belongs to the ATP-dependent DNA ligase family. The cofactor is Mg(2+).

It catalyses the reaction ATP + (deoxyribonucleotide)n-3'-hydroxyl + 5'-phospho-(deoxyribonucleotide)m = (deoxyribonucleotide)n+m + AMP + diphosphate.. DNA ligase that seals nicks in double-stranded DNA during DNA replication, DNA recombination and DNA repair. This chain is DNA ligase, found in Saccharolobus islandicus (strain Y.N.15.51 / Yellowstone #2) (Sulfolobus islandicus).